We begin with the raw amino-acid sequence, 614 residues long: MEKRTDYCGNITEKYIGQDVNLYGWVQRVRNLGNLVFIDLRDREGLVQIVVNKDSGKDLMEIANSLGNEYVIQVRGKVVKRSEANPDMKTGQVEVDATEIIILNEAKNPPFEIKDGVEISEQTRLKYRYLDLRRPEVQKAIILRSKILRATHEFFDENGFIDIETPILGKSSPEGARDYLVPSRIYPGSFYALPQSPQLFKQLLMGAGFDKYYQLARCFRDEDLRGDRQPEFTQIDMEMSFADEQTIQDYTEGLLKKIMKDVMGIDLKTPIKRMSWTDSMNKYGCDKPDTRYGMLIHDLSSIFKDSDFKVFSGAIADGGFVKGIAVKNGAKEYSRKKIDKKADFIKRFHAKGLAWVKFEDGEFSGPVARFLTDENKEALKKEFDLEGGELVVFVADKWKVVCDSLDHLRREFAKETGIIPKGVYDFVWVVDWPLFEYDEGLGRWVAAHHPFTMPDDEGVKLLTTDPHKAHARSYDIVMNGDEMGGGSIRIHKRSIQEDMFKALGFTKKRAYEQFGYLMDAFDMGFPPHAGLAIGLDRFAMMLAGKDNIRDVLAFPKNASASEPMMHAPAPVADQQLADLGIEVEKQYEDSVKATEERLEKMAAEDAEENSTWDK.

Position 174 (Glu174) interacts with L-aspartate. Residues 198 to 201 (QLFK) form an aspartate region. Arg220 is an L-aspartate binding site. Residues 220–222 (RDE) and Gln229 each bind ATP. His448 contacts L-aspartate. Residue Glu482 participates in ATP binding. Arg489 serves as a coordination point for L-aspartate. 534-537 (GLDR) is an ATP binding site.

This sequence belongs to the class-II aminoacyl-tRNA synthetase family. Type 1 subfamily. As to quaternary structure, homodimer.

Its subcellular location is the cytoplasm. It catalyses the reaction tRNA(Asp) + L-aspartate + ATP = L-aspartyl-tRNA(Asp) + AMP + diphosphate. Catalyzes the attachment of L-aspartate to tRNA(Asp) in a two-step reaction: L-aspartate is first activated by ATP to form Asp-AMP and then transferred to the acceptor end of tRNA(Asp). The polypeptide is Aspartate--tRNA ligase (Lactobacillus acidophilus (strain ATCC 700396 / NCK56 / N2 / NCFM)).